Reading from the N-terminus, the 260-residue chain is Phosphatidate cytidylyltransferase (260 aa).

7 helical membrane-spanning segments follow: residues 9-29, 46-66, 70-90, 102-122, 130-150, 172-192, and 196-216; these read IIAL…LMLF, MIKL…IIML, AGDW…FILL, FMDA…FMYF, LHYI…AYIF, FIGG…FVDF, and IWLL…GDLV.

It belongs to the CDS family.

It localises to the cell membrane. It catalyses the reaction a 1,2-diacyl-sn-glycero-3-phosphate + CTP + H(+) = a CDP-1,2-diacyl-sn-glycerol + diphosphate. The protein operates within phospholipid metabolism; CDP-diacylglycerol biosynthesis; CDP-diacylglycerol from sn-glycerol 3-phosphate: step 3/3. This Staphylococcus haemolyticus (strain JCSC1435) protein is Phosphatidate cytidylyltransferase (cdsA).